The primary structure comprises 204 residues: Large ribosomal subunit protein eL15 (204 aa).

The interval 185-204 is disordered; that stretch reads GGSRRAAWKRKNREHMHRKR. A compositionally biased stretch (basic residues) spans 190–204; the sequence is AAWKRKNREHMHRKR.

It belongs to the eukaryotic ribosomal protein eL15 family.

The chain is Large ribosomal subunit protein eL15 (RpL15) from Drosophila melanogaster (Fruit fly).